Consider the following 265-residue polypeptide: Phosphate import ATP-binding protein PstB (265 aa).

The ABC transporter domain occupies 18–260; sequence MECRDCHVYY…PEDPRTESYI (243 aa). 50–57 contacts ATP; that stretch reads GPSGCGKS.

It belongs to the ABC transporter superfamily. Phosphate importer (TC 3.A.1.7) family. As to quaternary structure, the complex is composed of two ATP-binding proteins (PstB), two transmembrane proteins (PstC and PstA) and a solute-binding protein (PstS).

It localises to the cell inner membrane. The enzyme catalyses phosphate(out) + ATP + H2O = ADP + 2 phosphate(in) + H(+). Its function is as follows. Part of the ABC transporter complex PstSACB involved in phosphate import. Responsible for energy coupling to the transport system. In Ruegeria pomeroyi (strain ATCC 700808 / DSM 15171 / DSS-3) (Silicibacter pomeroyi), this protein is Phosphate import ATP-binding protein PstB.